We begin with the raw amino-acid sequence, 494 residues long: Alpha-amylase-related protein (494 aa).

The first 20 residues, 1–20 (MIKFALALTLCLAGASLSLA), serve as a signal peptide directing secretion. Gln-21 bears the Pyrrolidone carboxylic acid mark. A disulfide bridge connects residues Cys-48 and Cys-104. Positions 118, 169, and 178 each coordinate Ca(2+). A disulfide bond links Cys-157 and Cys-171. Arg-206 serves as a coordination point for chloride. Asp-208 serves as the catalytic Nucleophile. His-212 contacts Ca(2+). The active-site Proton donor is the Glu-245. Chloride contacts are provided by Asn-308 and Arg-343. Cystine bridges form between Cys-376–Cys-382, Cys-418–Cys-441, and Cys-448–Cys-460.

The protein belongs to the glycosyl hydrolase 13 family. In terms of assembly, monomer. It depends on Ca(2+) as a cofactor. The cofactor is chloride.

The protein resides in the secreted. It catalyses the reaction Endohydrolysis of (1-&gt;4)-alpha-D-glucosidic linkages in polysaccharides containing three or more (1-&gt;4)-alpha-linked D-glucose units.. The sequence is that of Alpha-amylase-related protein (Amyrel) from Drosophila jambulina (Fruit fly).